The sequence spans 382 residues: Protein phosphatase 1A (382 aa).

Gly2 carries N-myristoyl glycine lipidation. The 269-residue stretch at 23–291 (RYGLSSMQGW…DNMSVILICF (269 aa)) folds into the PPM-type phosphatase domain. 4 residues coordinate Mn(2+): Asp60, Gly61, Asp239, and Asp282. Residues Ser375 and Ser377 each carry the phosphoserine modification.

This sequence belongs to the PP2C family. As to quaternary structure, monomer. Interacts with SMAD2; the interaction dephosphorylates SMAD2 in its C-terminal SXS motif resulting in disruption of the SMAD2/SMAD4 complex, SMAD2 nuclear export and termination of the TGF-beta-mediated signaling. Interacts with SMAD2; the interaction dephosphorylates SMAD2 in its C-terminal SXS motif resulting in disruption of the SMAD2/SMAD4 complex, SMAD2 nuclear export and termination of the TGF-beta-mediated signaling. Interacts with the phosphorylated form of IKBKB/IKKB. Mg(2+) serves as cofactor. Mn(2+) is required as a cofactor. Post-translationally, N-myristoylation is essential for the recognition of its substrates for dephosphorylation.

The protein localises to the nucleus. It localises to the cytoplasm. The protein resides in the cytosol. Its subcellular location is the membrane. It catalyses the reaction O-phospho-L-seryl-[protein] + H2O = L-seryl-[protein] + phosphate. The enzyme catalyses O-phospho-L-threonyl-[protein] + H2O = L-threonyl-[protein] + phosphate. Enzyme with a broad specificity. Negatively regulates TGF-beta signaling through dephosphorylating SMAD2 and SMAD3, resulting in their dissociation from SMAD4, nuclear export of the SMADs and termination of the TGF-beta-mediated signaling. Dephosphorylates PRKAA1 and PRKAA2. Plays an important role in the termination of TNF-alpha-mediated NF-kappa-B activation through dephosphorylating and inactivating IKBKB/IKKB. This is Protein phosphatase 1A (Ppm1a) from Mus musculus (Mouse).